We begin with the raw amino-acid sequence, 311 residues long: Methionyl-tRNA formyltransferase (311 aa).

Residue 112-115 (SLLP) participates in (6S)-5,6,7,8-tetrahydrofolate binding.

This sequence belongs to the Fmt family.

It catalyses the reaction L-methionyl-tRNA(fMet) + (6R)-10-formyltetrahydrofolate = N-formyl-L-methionyl-tRNA(fMet) + (6S)-5,6,7,8-tetrahydrofolate + H(+). Its function is as follows. Attaches a formyl group to the free amino group of methionyl-tRNA(fMet). The formyl group appears to play a dual role in the initiator identity of N-formylmethionyl-tRNA by promoting its recognition by IF2 and preventing the misappropriation of this tRNA by the elongation apparatus. The polypeptide is Methionyl-tRNA formyltransferase (Bartonella henselae (strain ATCC 49882 / DSM 28221 / CCUG 30454 / Houston 1) (Rochalimaea henselae)).